Consider the following 728-residue polypeptide: Polyribonucleotide nucleotidyltransferase (728 aa).

Aspartate 503 and aspartate 509 together coordinate Mg(2+). The 60-residue stretch at 570–629 (PRLTTIKIPSDCIGMVIGKGGETIRGITEETGAEINIADDGTVTIACTTKEGTDAALATI) folds into the KH domain. The region spanning 639–713 (GNIYVGKVRD…GKTKFALSIK (75 aa)) is the S1 motif domain.

The protein belongs to the polyribonucleotide nucleotidyltransferase family. Mg(2+) serves as cofactor.

It localises to the cytoplasm. It catalyses the reaction RNA(n+1) + phosphate = RNA(n) + a ribonucleoside 5'-diphosphate. Its function is as follows. Involved in mRNA degradation. Catalyzes the phosphorolysis of single-stranded polyribonucleotides processively in the 3'- to 5'-direction. This chain is Polyribonucleotide nucleotidyltransferase, found in Chlorobium chlorochromatii (strain CaD3).